A 141-amino-acid chain; its full sequence is Lutropin subunit beta (141 aa).

An N-terminal signal peptide occupies residues Met1 to Ala20. 5 disulfides stabilise this stretch: Cys29–Cys77, Cys43–Cys92, Cys54–Cys108, Cys58–Cys110, and Cys113–Cys120. A glycan (N-linked (GlcNAc...) asparagine) is linked at Asn33.

This sequence belongs to the glycoprotein hormones subunit beta family. Heterodimer of a common alpha chain and a unique beta chain which confers biological specificity to thyrotropin, lutropin, follitropin and gonadotropin.

Its subcellular location is the secreted. Functionally, promotes spermatogenesis and ovulation by stimulating the testes and ovaries to synthesize steroids. The polypeptide is Lutropin subunit beta (Lhb) (Mus musculus (Mouse)).